The sequence spans 362 residues: Leucoanthocyanidin dioxygenase (362 aa).

Positions 1-23 (MVTSAMGPSPRVEELARSGLDTI) are disordered. A Fe2OG dioxygenase domain is found at 214 to 313 (LIVQMKINFY…RISWAVFCEP (100 aa)). The Fe cation site is built by His-238, Asp-240, and His-294. Arg-304 is an active-site residue.

Belongs to the iron/ascorbate-dependent oxidoreductase family. Fe cation is required as a cofactor. L-ascorbate serves as cofactor. As to expression, expressed in red but not in green forma of P.frutescens. In red forma, it is predominantly expressed in stems and leaves, but not in roots.

It catalyses the reaction a (2R,3S,4S)-leucoanthocyanidin + 2-oxoglutarate + O2 = a 4-H-anthocyanidin with a 3-hydroxy group + succinate + CO2 + 2 H2O. The protein operates within pigment biosynthesis; anthocyanin biosynthesis. In terms of biological role, oxidation of leucoanthocyanidins into anthocyanidins. The sequence is that of Leucoanthocyanidin dioxygenase (ANS) from Perilla frutescens (Beefsteak mint).